We begin with the raw amino-acid sequence, 420 residues long: 3-isopropylmalate dehydratase large subunit (420 aa).

Residues Cys-300, Cys-360, and Cys-363 each coordinate [4Fe-4S] cluster.

It belongs to the aconitase/IPM isomerase family. LeuC type 2 subfamily. In terms of assembly, heterodimer of LeuC and LeuD. [4Fe-4S] cluster is required as a cofactor.

It carries out the reaction (2R,3S)-3-isopropylmalate = (2S)-2-isopropylmalate. The protein operates within amino-acid biosynthesis; L-leucine biosynthesis; L-leucine from 3-methyl-2-oxobutanoate: step 2/4. In terms of biological role, catalyzes the isomerization between 2-isopropylmalate and 3-isopropylmalate, via the formation of 2-isopropylmaleate. The chain is 3-isopropylmalate dehydratase large subunit from Helicobacter hepaticus (strain ATCC 51449 / 3B1).